Consider the following 207-residue polypeptide: 3-demethoxyubiquinol 3-hydroxylase (207 aa).

Glu56, Glu86, His89, Glu138, Glu170, and His173 together coordinate Fe cation.

It belongs to the COQ7 family. The cofactor is Fe cation.

The protein resides in the cell membrane. It catalyses the reaction a 5-methoxy-2-methyl-3-(all-trans-polyprenyl)benzene-1,4-diol + AH2 + O2 = a 3-demethylubiquinol + A + H2O. It participates in cofactor biosynthesis; ubiquinone biosynthesis. Its function is as follows. Catalyzes the hydroxylation of 2-nonaprenyl-3-methyl-6-methoxy-1,4-benzoquinol during ubiquinone biosynthesis. The chain is 3-demethoxyubiquinol 3-hydroxylase from Cupriavidus pinatubonensis (strain JMP 134 / LMG 1197) (Cupriavidus necator (strain JMP 134)).